Consider the following 367-residue polypeptide: DNA replication and repair protein RecF (367 aa).

30 to 37 (GANGSGKT) provides a ligand contact to ATP.

Belongs to the RecF family.

It is found in the cytoplasm. Functionally, the RecF protein is involved in DNA metabolism; it is required for DNA replication and normal SOS inducibility. RecF binds preferentially to single-stranded, linear DNA. It also seems to bind ATP. The chain is DNA replication and repair protein RecF from Pseudomonas fluorescens (strain Pf0-1).